The sequence spans 81 residues: Small ribosomal subunit protein bS16 (81 aa).

This sequence belongs to the bacterial ribosomal protein bS16 family.

The protein is Small ribosomal subunit protein bS16 of Clostridium perfringens (strain ATCC 13124 / DSM 756 / JCM 1290 / NCIMB 6125 / NCTC 8237 / Type A).